A 4544-amino-acid polypeptide reads, in one-letter code: Prolow-density lipoprotein receptor-related protein 1 (4544 aa).

A signal peptide spans 1 to 19 (MLTPPLLLLLPLLSALVAA). Residues 20-4419 (AIDAPKTCSP…EHVFSQQQPG (4400 aa)) are Extracellular-facing. 2 LDL-receptor class A domains span residues 25–66 (KTCS…ICPQ) and 70–110 (QRCQ…HCRE). Cystine bridges form between C27–C40, C34–C53, C47–C64, C72–C85, C79–C98, and C92–C108. In terms of domain architecture, EGF-like 1 spans 111–149 (LQGNCSRLGCQHHCVPTLDGPTCYCNSSFQLQADGKTCK). An N-linked (GlcNAc...) asparagine glycan is attached at N114. 6 cysteine pairs are disulfide-bonded: C115–C124, C120–C133, C135–C148, C154–C164, C160–C173, and C175–C188. N-linked (GlcNAc...) asparagine glycosylation is present at N136. The EGF-like 2; calcium-binding domain maps to 150–189 (DFDECSVYGTCSQLCTNTDGSFICGCVEGYLLQPDNRSCK). N-linked (GlcNAc...) asparagine glycans are attached at residues N185, N239, and N274. 3 LDL-receptor class B repeats span residues 292-334 (GNFY…DPAM), 335-378 (GKVF…DLVS), and 379-422 (RLVY…FENY). N-linked (GlcNAc...) asparagine glycosylation is present at N357. N-linked (GlcNAc...) asparagine glycosylation occurs at N446. Residues 474–520 (RSHACENDQYGKPGGCSDICLLANSHKARTCRCRSGFSLGSDGKSCK) enclose the EGF-like 3 domain. 3 disulfide bridges follow: C478–C493, C489–C504, and C506–C519. 4 LDL-receptor class B repeats span residues 571–613 (GFIY…DWMG), 614–659 (DNLY…DPLN), 660–710 (GWMY…DIPA), and 711–754 (GRLY…HGNY). N729 is a glycosylation site (N-linked (GlcNAc...) (complex) asparagine). The EGF-like 4 domain occupies 803-843 (GTNKCRVNNGGCSSLCLATPGSRQCACAEDQVLDADGVTCL). Cystine bridges form between C807–C818, C814–C827, C829–C842, C854–C866, C861–C879, C873–C890, C895–C907, C902–C920, C914–C931, C936–C948, C943–C961, C955–C971, C976–C989, C984–C1002, C996–C1011, C1015–C1027, C1022–C1040, C1034–C1051, C1062–C1075, C1069–C1088, C1082–C1097, C1104–C1118, C1112–C1131, C1125–C1140, C1145–C1159, C1152–C1172, C1166–C1182, C1185–C1196, C1192–C1206, C1208–C1221, C1227–C1237, C1233–C1246, and C1248–C1261. LDL-receptor class A domains are found at residues 852–892 (PQCQ…LCHQ), 893–933 (HTCP…TCSA), 934–973 (RTCP…SCAY), 974–1013 (PTCF…GCSH), 1013–1053 (HSCS…NCTN), 1060–1099 (GGCH…SCEG), 1102–1142 (HVCD…NCES), and 1143–1182 (LACR…GELC). Ca(2+)-binding residues include W871, D874, D876, D878, D884, and E885. A glycan (N-linked (GlcNAc...) asparagine) is linked at N928. Positions 1032, 1035, 1037, 1039, 1045, and 1046 each coordinate Ca(2+). N1050 is a glycosylation site (N-linked (GlcNAc...) asparagine). Ca(2+)-binding residues include W1080, D1083, D1085, D1087, D1093, and E1094. 2 N-linked (GlcNAc...) asparagine glycosylation sites follow: N1154 and N1155. EGF-like domains follow at residues 1183–1222 (DQCS…HTCQ) and 1223–1262 (IQSY…ESCR). N1195 and N1218 each carry an N-linked (GlcNAc...) asparagine glycan. 5 LDL-receptor class B repeats span residues 1309 to 1355 (SALY…DWIA), 1356 to 1398 (GNIY…DPRD), 1399 to 1445 (GILF…DYLE), 1446 to 1490 (KRIL…YGGE), and 1491 to 1531 (VYWT…YHPS). An N-linked (GlcNAc...) (complex) asparagine glycan is attached at N1511. Residues 1536-1579 (APNPCEANGGQGPCSHLCLINYNRTVSCACPHLMKLHKDNTTCY) form the EGF-like 7 domain. 3 disulfide bridges follow: C1540–C1553, C1549–C1563, and C1565–C1578. N1558, N1575, N1616, and N1645 each carry an N-linked (GlcNAc...) asparagine glycan. LDL-receptor class B repeat units follow at residues 1627-1669 (QRVY…DWVS), 1670-1713 (RNLF…HPLR), 1714-1753 (GKLY…DFPE), and 1754-1798 (SKLY…MGDK). N-linked (GlcNAc...) asparagine glycans are attached at residues N1723, N1733, N1763, and N1825. One can recognise an EGF-like 8 domain in the interval 1846-1887 (GTNPCSVNNGDCSQLCLPTSETTRSCMCTAGYSLRSGQQACE). Disulfide bonds link C1850–C1861, C1857–C1871, and C1873–C1886. Residue N1933 is glycosylated (N-linked (GlcNAc...) asparagine). LDL-receptor class B repeat units lie at residues 1934-1976 (DTIY…DWIA), 1977-2019 (GNIY…HPEK), 2020-2063 (GYLF…DYQD), and 2064-2107 (GKLY…FEDF). Residue N1995 is glycosylated (N-linked (GlcNAc...) asparagine). N6-acetyllysine is present on K2009. N2048 carries an N-linked (GlcNAc...) asparagine glycan. N-linked (GlcNAc...) asparagine glycans are attached at residues N2117 and N2127. An EGF-like 9 domain is found at 2155-2195 (GTNVCAVANGGCQQLCLYRGRGQRACACAHGMLAEDGASCR). Cystine bridges form between C2159–C2170, C2166–C2180, and C2182–C2194. LDL-receptor class B repeat units lie at residues 2253–2294 (NRIF…HRGW), 2295–2343 (DTLY…DECQ), 2344–2388 (NLMF…DHRA), 2389–2431 (EKLY…YGEH), and 2432–2473 (IFWT…VAND). N2472 carries an N-linked (GlcNAc...) asparagine glycan. An EGF-like 10 domain is found at 2478–2518 (ELSPCRINNGGCQDLCLLTHQGHVNCSCRGGRILQDDLTCR). Disulfide bonds link C2482–C2493, C2489–C2503, and C2505–C2517. N2502 is a glycosylation site (N-linked (GlcNAc...) asparagine). The N-linked (GlcNAc...) asparagine glycan is linked to N2521. 7 consecutive LDL-receptor class A domains span residues 2522–2563 (SSCR…YCNS), 2564–2602 (RRCK…PCNK), 2603–2641 (TACG…NCSA), 2642–2690 (TDCS…DCPG), 2694–2732 (PRCP…HCNK), 2732–2771 (KFCS…HCEG), and 2772–2814 (KTCG…GCLY). 6 disulfide bridges follow: C2524-C2537, C2532-C2550, C2544-C2561, C2566-C2578, C2573-C2591, and C2585-C2600. N-linked (GlcNAc...) asparagine glycosylation occurs at N2539. The N-linked (GlcNAc...) asparagine glycan is linked to N2601. 15 disulfide bridges follow: C2605–C2617, C2612–C2630, C2624–C2639, C2644–C2666, C2660–C2679, C2673–C2688, C2696–C2708, C2703–C2721, C2715–C2730, C2734–C2746, C2741–C2759, C2753–C2769, C2774–C2787, C2781–C2800, and C2794–C2812. N-linked (GlcNAc...) asparagine glycosylation is found at N2620 and N2638. N-linked (GlcNAc...) asparagine glycosylation occurs at N2815. LDL-receptor class A domains lie at 2816-2855 (STCD…ECEY), 2856-2899 (PTCG…HCTS), and 2902-2940 (HKCN…RGCH). Disulfide bonds link C2818–C2830, C2825–C2843, C2837–C2853, C2858–C2870, C2865–C2884, C2878–C2897, C2904–C2917, C2912–C2930, C2924–C2939, C2944–C2956, C2952–C2965, C2967–C2980, C2986–C2996, C2992–C3005, and C3007–C3021. N2905 carries N-linked (GlcNAc...) asparagine glycosylation. Residues 2941-2981 (INECLSRKLSGCSQDCEDLKIGFKCRCRPGFRLKDDGRTCA) form the EGF-like 11 domain. The EGF-like 12; calcium-binding domain occupies 2982 to 3022 (DVDECSTTFPCSQRCINTHGSYKCLCVEGYAPRGGDPHSCK). N3048 and N3089 each carry an N-linked (GlcNAc...) asparagine glycan. 5 LDL-receptor class B repeats span residues 3069 to 3113 (QMIY…DWVG), 3114 to 3156 (GNLY…DVQN), 3157 to 3200 (GYLY…DYVT), 3201 to 3243 (ERIY…FEDY), and 3244 to 3284 (VYWT…FHAL). The N-linked (GlcNAc...) asparagine glycan is linked to N3264. The EGF-like 13 domain occupies 3290–3331 (PNHPCKVNNGGCSNLCLLSPGGGHKCACPTNFYLGSDGRTCV). Intrachain disulfides connect C3294/C3305, C3301/C3315, and C3317/C3330. 11 consecutive LDL-receptor class A domains span residues 3332 to 3371 (SNCT…DCPE), 3372 to 3410 (FKCR…NCDI), 3411 to 3450 (HVCL…DCPE), 3451 to 3491 (VTCA…NCTQ), 3492 to 3533 (MTCG…ECDE), 3534 to 3572 (RTCE…SCTP), 3573 to 3611 (RPCS…DCTP), 3611 to 3649 (PRCD…ACGT), 3652 to 3692 (RTCP…ECAR), 3693 to 3733 (FVCP…DCEP), and 3739 to 3778 (THCK…DCSI). N3333 carries an N-linked (GlcNAc...) asparagine glycan. 39 disulfides stabilise this stretch: C3334–C3346, C3341–C3359, C3353–C3369, C3374–C3386, C3381–C3399, C3393–C3408, C3413–C3426, C3420–C3439, C3433–C3448, C3453–C3466, C3460–C3479, C3473–C3489, C3494–C3507, C3501–C3520, C3514–C3531, C3536–C3548, C3543–C3561, C3555–C3570, C3575–C3587, C3582–C3600, C3594–C3609, C3613–C3625, C3620–C3638, C3632–C3647, C3654–C3666, C3661–C3679, C3673–C3690, C3695–C3709, C3703–C3722, C3716–C3731, C3741–C3754, C3749–C3767, C3761–C3776, C3785–C3798, C3792–C3807, C3809–C3822, C3828–C3838, C3834–C3847, and C3849–C3860. A glycan (N-linked (GlcNAc...) asparagine) is linked at N3488. The N-linked (GlcNAc...) asparagine glycan is linked to N3662. 2 EGF-like domains span residues 3781 to 3823 (KLTS…PGCQ) and 3824 to 3861 (DINE…NTCK). N3788 is a glycosylation site (N-linked (GlcNAc...) asparagine). The N-linked (GlcNAc...) asparagine glycan is linked to N3839. LDL-receptor class B repeat units follow at residues 3912-3954 (GRVY…HLNI), 3970-4012 (GNVY…DPLR), 4013-4056 (GTMY…DYHN), and 4057-4101 (ERLY…FEDY). Positions 3940 to 3943 (RHRR) match the Recognition site for proteolytical processing motif. A glycan (N-linked (GlcNAc...) asparagine) is linked at N3953. 2 N-linked (GlcNAc...) asparagine glycosylation sites follow: N4075 and N4125. 7 consecutive EGF-like domains span residues 4147-4183 (VTNP…GTCV), 4196-4232 (RPGT…DKCE), 4232-4268 (ELDQ…PKCT), 4268-4304 (TQQV…DRCQ), 4304-4340 (QYRQ…SRCE), 4340-4375 (EVNK…PSCL), and 4373-4409 (SCLT…PRCE). 17 disulfide bridges follow: C4151–C4160, C4156–C4169, C4171–C4182, C4200–C4210, C4204–C4220, C4222–C4231, C4236–C4246, C4240–C4256, C4258–C4267, C4272–C4282, C4276–C4292, C4294–C4303, C4308–C4318, C4312–C4328, C4330–C4339, C4344–C4352, and C4347–C4363. N4179 carries N-linked (GlcNAc...) asparagine glycosylation. N-linked (GlcNAc...) asparagine glycosylation is found at N4278 and N4279. Residue N4364 is glycosylated (N-linked (GlcNAc...) asparagine). 4 cysteine pairs are disulfide-bonded: C4365–C4374, C4377–C4387, C4381–C4397, and C4399–C4408. The chain crosses the membrane as a helical span at residues 4420 to 4444 (HIASILIPLLLLLLLVLVAGVVFWY). The Cytoplasmic portion of the chain corresponds to 4445 to 4544 (KRRVQGAKGF…PEDEIGDPLA (100 aa)). The segment at 4445–4544 (KRRVQGAKGF…PEDEIGDPLA (100 aa)) is interaction with MAFB. The residue at position 4460 (T4460) is a Phosphothreonine. The NPXY motif motif lies at 4502–4507 (FTNPVY). Y4507 bears the Phosphotyrosine mark. Phosphoserine occurs at positions 4517, 4520, and 4523.

This sequence belongs to the LDLR family. As to quaternary structure, heterodimer of an 85-kDa membrane-bound carboxyl subunit and a non-covalently attached 515-kDa N-terminal subunit. Intracellular domain interacts with MAFB. Found in a complex with PID1/PCLI1, LRP1 and CUBNI. Interacts with SNX17, PID1/PCLI1, PDGF and CUBN. The intracellular domain interacts with SHC1, GULP1 and DAB1. Can weakly interact (via NPXY motif) with DAB2 (via PID domain); the interaction is enhanced by tyrosine phosphorylation of the NPXY motif. Interacts with MDK; promotes neuronal survival. Interacts with LRPAP1; this interaction is followed by rapid internalization. Interacts with uPA/PLAU and PAI1/SERPINE1, either individually or in complex with each other, leading to rapid endocytosis; this interaction is abolished in the presence of LRPAP1/RAP. Also interacts with tPA/PLAT alone or in complex with SERPINE1. Interacts with the urokinase receptor PLAUR; this interaction leads to PLAUR internalization and is impaired in the presence of SORL1. Interacts with PDGFB. Interacts with TAU/MAPT, leading to endocytosis; this interaction is reduced in the presence of LRPAP1/RAP. Interacts with IGFBP3; this interaction mediates cell growth inhibition independently of IGF1. Interacts with ADGRG6. (Microbial infection) Interacts with bacterial exotoxins. In terms of assembly, (Microbial infection) Interacts with Rift valley fever virus (RVFV) glycoprotein N; this interaction facilitates virus entry. In terms of processing, cleaved into a 85 kDa membrane-spanning subunit (LRP-85) and a 515 kDa large extracellular domain (LRP-515) that remains non-covalently associated. Gamma-secretase-dependent cleavage of LRP-85 releases the intracellular domain from the membrane. Post-translationally, the N-terminus is blocked. Phosphorylated on serine and threonine residues. In terms of processing, phosphorylated on tyrosine residues upon stimulation with PDGF. Tyrosine phosphorylation promotes interaction with SHC1. In terms of tissue distribution, most abundant in liver, brain and lung.

The protein localises to the cell membrane. The protein resides in the membrane. It localises to the coated pit. It is found in the cytoplasm. Its subcellular location is the nucleus. The protein localises to the golgi outpost. The protein resides in the cytoskeleton. It localises to the microtubule organizing center. Its function is as follows. Endocytic receptor involved in endocytosis and in phagocytosis of apoptotic cells. Required for early embryonic development. Involved in cellular lipid homeostasis. Involved in the plasma clearance of chylomicron remnants and activated LRPAP1 (alpha 2-macroglobulin), as well as the local metabolism of complexes between plasminogen activators and their endogenous inhibitors. Acts as an LRPAP1 alpha-2-macroglobulin receptor. Acts as TAU/MAPT receptor and controls the endocytosis of TAU/MAPT as well as its subsequent spread. May modulate cellular events, such as APP metabolism, kinase-dependent intracellular signaling, neuronal calcium signaling as well as neurotransmission. Also acts as a receptor for IGFBP3 to mediate cell growth inhibition. Functionally, (Microbial infection) Functions as a receptor for Pseudomonas aeruginosa exotoxin A. The protein is Prolow-density lipoprotein receptor-related protein 1 of Homo sapiens (Human).